Consider the following 275-residue polypeptide: Beta-lactamase OXA-3 (275 aa).

The first 21 residues, methionine 1–alanine 21, serve as a signal peptide directing secretion. Residue serine 72 is the Acyl-ester intermediate of the active site. Lysine 75 is subject to N6-carboxylysine. Lysine 210–glycine 212 provides a ligand contact to substrate.

The protein belongs to the class-D beta-lactamase family.

The catalysed reaction is a beta-lactam + H2O = a substituted beta-amino acid. Its function is as follows. This is an oxacillin-hydrolyzing beta-lactamase. This Pseudomonas aeruginosa protein is Beta-lactamase OXA-3 (bla).